Here is a 534-residue protein sequence, read N- to C-terminus: Protein tweety homolog 2 (534 aa).

Over 1-44 (MAAARVEYIAPWWVYWLHNFPHVDLSLRQKSPDFNPKDPGYQQT) the chain is Extracellular. A helical membrane pass occupies residues 45-65 (LLFVALIVALCAAVNLLFVSV). At 66–87 (YLICLCCCKKEDETETKKTSSC) the chain is on the cytoplasmic side. Residues 88–108 (CVTWTAAVSGLLCCAAVGIGF) traverse the membrane as a helical segment. At 109-213 (YGNSETNDGV…QTSTIEYYRW (105 aa)) the chain is on the extracellular side. 2 residues coordinate Ca(2+): glutamate 113 and aspartate 116. N-linked (GlcNAc...) asparagine glycosylation occurs at asparagine 129. The RGD motif lies at 164-166 (RGD). An N-linked (GlcNAc...) asparagine glycan is attached at asparagine 197. A helical transmembrane segment spans residues 214 to 234 (LSYLLLFISYVVICLVTCVGL). Residues 235-240 (AKKSKC) are Cytoplasmic-facing. Residues 241 to 261 (LLLIMLCFGLIALMLSWTSLA) form a helical membrane-spanning segment. Residues 262 to 388 (LETSSAMGTS…IGICYDGVEG (127 aa)) are Extracellular-facing. 2 cysteine pairs are disulfide-bonded: cysteine 274–cysteine 382 and cysteine 300–cysteine 367. Asparagine 283 and asparagine 352 each carry an N-linked (GlcNAc...) asparagine glycan. The chain crosses the membrane as a helical span at residues 389-409 (MLYLGLFSLLAALAFTAMVCA). At 410-534 (MPQAWKHLEA…SSIYSNVFPA (125 aa)) the chain is on the cytoplasmic side.

The protein belongs to the tweety family. In terms of assembly, forms cis-homodimers in the presence of Ca(+2) and forms monomers and trans-dimers in the absence of Ca(2+).

It localises to the cell membrane. It carries out the reaction chloride(in) = chloride(out). The enzyme catalyses L-glutamate(out) = L-glutamate(in). In terms of biological role, may act as a calcium-independent, swelling-dependent volume-regulated anion channel (VRAC-swell) which plays a pivotal role in the process of regulatory volume decrease (RVD) in the brain through the efflux of anions like chloride and organic osmolytes like glutamate. Probable large-conductance Ca(2+)-activated chloride channel. The protein is Protein tweety homolog 2 (ttyh2) of Xenopus tropicalis (Western clawed frog).